Here is an 88-residue protein sequence, read N- to C-terminus: UPF0213 protein SAG0778 (88 aa).

The GIY-YIG domain maps to 4–80 (VPAYMYVLEC…QKTRQAKLTY (77 aa)).

The protein belongs to the UPF0213 family.

This Streptococcus agalactiae serotype V (strain ATCC BAA-611 / 2603 V/R) protein is UPF0213 protein SAG0778.